A 101-amino-acid polypeptide reads, in one-letter code: NADH-quinone oxidoreductase subunit K (101 aa).

3 consecutive transmembrane segments (helical) span residues 4–24 (LTHYLVLAAVMFAISVLGIFL), 30–50 (IVLLMAIELMLLAVNFNFIAF), and 61–81 (IFVFFVLTVAAAESAIGLAIL).

Belongs to the complex I subunit 4L family. As to quaternary structure, NDH-1 is composed of 14 different subunits. Subunits NuoA, H, J, K, L, M, N constitute the membrane sector of the complex.

It localises to the cell inner membrane. It catalyses the reaction a quinone + NADH + 5 H(+)(in) = a quinol + NAD(+) + 4 H(+)(out). Its function is as follows. NDH-1 shuttles electrons from NADH, via FMN and iron-sulfur (Fe-S) centers, to quinones in the respiratory chain. The immediate electron acceptor for the enzyme in this species is believed to be ubiquinone. Couples the redox reaction to proton translocation (for every two electrons transferred, four hydrogen ions are translocated across the cytoplasmic membrane), and thus conserves the redox energy in a proton gradient. The chain is NADH-quinone oxidoreductase subunit K from Laribacter hongkongensis (strain HLHK9).